A 482-amino-acid polypeptide reads, in one-letter code: Adenylyltransferase and sulfurtransferase MOCS3-2 (482 aa).

ATP is bound by residues glycine 125, aspartate 146, 153–157 (NNLHR), lysine 170, and 214–215 (DN). Cysteine 255 and cysteine 258 together coordinate Zn(2+). Cysteine 272 acts as the Glycyl thioester intermediate; for adenylyltransferase activity in catalysis. Residues cysteine 330 and cysteine 333 each coordinate Zn(2+). One can recognise a Rhodanese domain in the interval 385 to 480 (DGEPHLLLDV…WGQDVDPDFP (96 aa)). The active-site Cysteine persulfide intermediate; for sulfurtransferase activity is cysteine 440.

The protein in the N-terminal section; belongs to the HesA/MoeB/ThiF family. UBA4 subfamily. The cofactor is Zn(2+).

The protein localises to the cytoplasm. The catalysed reaction is [molybdopterin-synthase sulfur-carrier protein]-C-terminal Gly-Gly + ATP + H(+) = [molybdopterin-synthase sulfur-carrier protein]-C-terminal Gly-Gly-AMP + diphosphate. It catalyses the reaction [molybdopterin-synthase sulfur-carrier protein]-C-terminal Gly-Gly-AMP + S-sulfanyl-L-cysteinyl-[cysteine desulfurase] + AH2 = [molybdopterin-synthase sulfur-carrier protein]-C-terminal-Gly-aminoethanethioate + L-cysteinyl-[cysteine desulfurase] + A + AMP + 2 H(+). Its pathway is tRNA modification; 5-methoxycarbonylmethyl-2-thiouridine-tRNA biosynthesis. It participates in cofactor biosynthesis; molybdopterin biosynthesis. Plays a central role in 2-thiolation of mcm(5)S(2)U at tRNA wobble positions of cytosolic tRNA(Lys), tRNA(Glu) and tRNA(Gln). Also essential during biosynthesis of the molybdenum cofactor. Acts by mediating the C-terminal thiocarboxylation of sulfur carriers URM1 and MOCS2A. Its N-terminus first activates URM1 and MOCS2A as acyl-adenylates (-COAMP), then the persulfide sulfur on the catalytic cysteine is transferred to URM1 and MOCS2A to form thiocarboxylation (-COSH) of their C-terminus. The reaction probably involves hydrogen sulfide that is generated from the persulfide intermediate and that acts as a nucleophile towards URM1 and MOCS2A. Subsequently, a transient disulfide bond is formed. Does not use thiosulfate as sulfur donor; NFS1 probably acting as a sulfur donor for thiocarboxylation reactions. The chain is Adenylyltransferase and sulfurtransferase MOCS3-2 from Zea mays (Maize).